The sequence spans 657 residues: Histidine ammonia-lyase (657 aa).

The segment at residues 253-255 (ASG) is a cross-link (5-imidazolinone (Ala-Gly)). Serine 254 is modified (2,3-didehydroalanine (Ser)). At threonine 396 the chain carries Phosphothreonine. The residue at position 635 (serine 635) is a Phosphoserine. Phosphothreonine is present on threonine 637. Position 648 is a phosphoserine (serine 648).

The protein belongs to the PAL/histidase family. Contains an active site 4-methylidene-imidazol-5-one (MIO), which is formed autocatalytically by cyclization and dehydration of residues Ala-Ser-Gly.

The enzyme catalyses L-histidine = trans-urocanate + NH4(+). Its pathway is amino-acid degradation; L-histidine degradation into L-glutamate; N-formimidoyl-L-glutamate from L-histidine: step 1/3. The sequence is that of Histidine ammonia-lyase (Hal) from Mus musculus (Mouse).